The following is a 221-amino-acid chain: MRILLIEDDNLIGNGLQIGLTKLGFAVDWFTDGKTGMAALTSAPYDAVVLDLTLPKLDGLEVLQQWRSNHQDVPVLILTARDTLDERVKGLQSGADDYLCKPFALAEVAARLQALIRRRYGYHHSVIEQAGVKLDQNQRSVWLNNQPISLTSREYKLLELFMLNKDRVLSRSSIEEKLSSWDEEISSGALDVHIYNLRQKLGKQFIRTVHGVGYALGQVEK.

The 115-residue stretch at Arg-2–Ile-116 folds into the Response regulatory domain. Residue Asp-51 is modified to 4-aspartylphosphate. The ompR/PhoB-type DNA-binding region spans His-124 to Gln-218.

Phosphorylated by QseC.

It is found in the cytoplasm. Member of a two-component regulatory system QseB/QseC. The polypeptide is Transcriptional regulatory protein QseB (qseB) (Haemophilus influenzae (strain ATCC 51907 / DSM 11121 / KW20 / Rd)).